The following is a 208-amino-acid chain: LysM and putative peptidoglycan-binding domain-containing protein 2 (208 aa).

The segment at 1–54 is disordered; sequence MAEFSPVLPPLRDDGGGGRYGQPLFPRSRSGSESDSELSQSLARTKTRSYGSTA. Over residues 27 to 42 the composition is skewed to low complexity; it reads RSRSGSESDSELSQSL. The 45-residue stretch at 65–109 folds into the LysM domain; it reads IEHRVTDGETLQGIALKYGVTMEQIKRVNKLFSNDCIFLRNTLSI. Disordered stretches follow at residues 122–169 and 187–208; these read LSLE…EELS and AARK…YQEI. Over residues 129–140 the composition is skewed to polar residues; sequence SEGNTPQESPCV. Residues 147–156 show a composition bias toward pro residues; sequence PSPPPEPSVP.

The polypeptide is LysM and putative peptidoglycan-binding domain-containing protein 2 (lysmd2) (Danio rerio (Zebrafish)).